The chain runs to 329 residues: Isopenicillin N synthase (329 aa).

The isopenicillin N site is built by arginine 87, tyrosine 91, serine 183, and tyrosine 189. N-[(5S)-5-amino-5-carboxypentanoyl]-L-cysteinyl-D-valine contacts are provided by arginine 87, tyrosine 91, serine 183, tyrosine 189, histidine 212, and aspartate 214. The Fe2OG dioxygenase domain maps to 180-286; sequence SLSSVSLIRY…RLSLPFFLNG (107 aa). 3 residues coordinate Fe(2+): histidine 212, aspartate 214, and histidine 268. Arginine 277 serves as a coordination point for 2-oxoglutarate. Position 279 (serine 279) interacts with isopenicillin N. Residue serine 279 coordinates N-[(5S)-5-amino-5-carboxypentanoyl]-L-cysteinyl-D-valine.

The protein belongs to the iron/ascorbate-dependent oxidoreductase family. Requires Fe cation as cofactor. L-ascorbate serves as cofactor.

The enzyme catalyses N-[(5S)-5-amino-5-carboxypentanoyl]-L-cysteinyl-D-valine + O2 = isopenicillin N + 2 H2O. Its pathway is antibiotic biosynthesis; penicillin G biosynthesis; penicillin G from L-alpha-aminoadipate and L-cysteine and L-valine: step 2/3. In terms of biological role, removes, in the presence of oxygen, 4 hydrogen atoms from delta-L-(alpha-aminoadipyl)-L-cysteinyl-D-valine (ACV) to form the azetidinone and thiazolidine rings of isopenicillin. The sequence is that of Isopenicillin N synthase (pcbC) from Streptomyces clavuligerus.